The primary structure comprises 229 residues: Cytochrome c oxidase subunit 2 (229 aa).

Residues Met-1 to Tyr-26 lie on the Mitochondrial intermembrane side of the membrane. A helical membrane pass occupies residues Thr-27 to Ser-48. The Mitochondrial matrix segment spans residues Ser-49–Glu-62. Residues Thr-63–Gln-82 traverse the membrane as a helical segment. The Mitochondrial intermembrane segment spans residues Leu-83–Glu-229. Residues His-161, Cys-196, Glu-198, Cys-200, His-204, and Met-207 each coordinate Cu cation. Position 198 (Glu-198) interacts with Mg(2+).

Belongs to the cytochrome c oxidase subunit 2 family. Component of the cytochrome c oxidase (complex IV, CIV), a multisubunit enzyme composed of a catalytic core of 3 subunits and several supernumerary subunits. The complex exists as a monomer or a dimer and forms supercomplexes (SCs) in the inner mitochondrial membrane with ubiquinol-cytochrome c oxidoreductase (cytochrome b-c1 complex, complex III, CIII). Cu cation serves as cofactor.

Its subcellular location is the mitochondrion inner membrane. It catalyses the reaction 4 Fe(II)-[cytochrome c] + O2 + 8 H(+)(in) = 4 Fe(III)-[cytochrome c] + 2 H2O + 4 H(+)(out). Component of the cytochrome c oxidase, the last enzyme in the mitochondrial electron transport chain which drives oxidative phosphorylation. The respiratory chain contains 3 multisubunit complexes succinate dehydrogenase (complex II, CII), ubiquinol-cytochrome c oxidoreductase (cytochrome b-c1 complex, complex III, CIII) and cytochrome c oxidase (complex IV, CIV), that cooperate to transfer electrons derived from NADH and succinate to molecular oxygen, creating an electrochemical gradient over the inner membrane that drives transmembrane transport and the ATP synthase. Cytochrome c oxidase is the component of the respiratory chain that catalyzes the reduction of oxygen to water. Electrons originating from reduced cytochrome c in the intermembrane space (IMS) are transferred via the dinuclear copper A center (CU(A)) of subunit 2 and heme A of subunit 1 to the active site in subunit 1, a binuclear center (BNC) formed by heme A3 and copper B (CU(B)). The BNC reduces molecular oxygen to 2 water molecules using 4 electrons from cytochrome c in the IMS and 4 protons from the mitochondrial matrix. This chain is Cytochrome c oxidase subunit 2 (COII), found in Patiria pectinifera (Starfish).